The chain runs to 352 residues: MDYQVSSPTYDIDYYTSEPCQKINVKQIAARLLPPLYSLVFIFGFVGNMLVILILINCKRLKSMTDIYLLNLAISDLFFLLTVPFWAHYAAAQWDFGNTMCQLLTGLYFIGFFSGIFFIILLTIDRYLAIVHAVFALKARTVTFGVVTSVITWVVAVFASLPGIIFTRSQKEGLHYTCSSHFPYSQYQFWKNFQTLKIVILGLVLPLLVMVICYSGILKTLLRCRNEKKRHRAVRLIFTIMIVYFLFWAPYNIVLLLNTFQEFFGLNNCSSSNRLDQAMQVTETLGMTHCCINPIIYAFVGEKFRNYLLVFFQKHIAKHFCKCCSIFQQEAPERASSVYTRSTGEQEISVGL.

Residues 1-30 are Extracellular-facing; the sequence is MDYQVSSPTYDIDYYTSEPCQKINVKQIAA. A Sulfotyrosine modification is found at Tyr3. O-linked (GalNAc...) serine glycans are attached at residues Ser6 and Ser7. Tyr10, Tyr14, and Tyr15 each carry sulfotyrosine. Disulfide bonds link Cys20-Cys269 and Cys101-Cys178. The helical transmembrane segment at 31–58 threads the bilayer; it reads RLLPPLYSLVFIFGFVGNMLVILILINC. The Cytoplasmic portion of the chain corresponds to 59–68; it reads KRLKSMTDIY. A helical transmembrane segment spans residues 69–89; that stretch reads LLNLAISDLFFLLTVPFWAHY. Residues 90–102 are Extracellular-facing; it reads AAAQWDFGNTMCQ. The chain crosses the membrane as a helical span at residues 103–124; it reads LLTGLYFIGFFSGIFFIILLTI. The Cytoplasmic segment spans residues 125 to 141; sequence DRYLAIVHAVFALKART. A helical transmembrane segment spans residues 142–166; that stretch reads VTFGVVTSVITWVVAVFASLPGIIF. The Extracellular segment spans residues 167–198; that stretch reads TRSQKEGLHYTCSSHFPYSQYQFWKNFQTLKI. A helical membrane pass occupies residues 199–218; that stretch reads VILGLVLPLLVMVICYSGIL. At 219–235 the chain is on the cytoplasmic side; it reads KTLLRCRNEKKRHRAVR. Residues 236–260 form a helical membrane-spanning segment; that stretch reads LIFTIMIVYFLFWAPYNIVLLLNTF. The Extracellular segment spans residues 261–277; it reads QEFFGLNNCSSSNRLDQ. A helical transmembrane segment spans residues 278-301; sequence AMQVTETLGMTHCCINPIIYAFVG. The Cytoplasmic segment spans residues 302-352; the sequence is EKFRNYLLVFFQKHIAKHFCKCCSIFQQEAPERASSVYTRSTGEQEISVGL. Residues Cys321, Cys323, and Cys324 are each lipidated (S-palmitoyl cysteine). Ser336, Ser337, Ser342, and Ser349 each carry phosphoserine; by BARK1.

The protein belongs to the G-protein coupled receptor 1 family. As to quaternary structure, interacts with PRAF2. Efficient ligand binding to CCL3/MIP-1alpha and CCL4/MIP-1beta requires sulfation, O-glycosylation and sialic acid modifications. Glycosylation on Ser-6 is required for efficient binding of CCL4. Interacts with GRK2. Interacts with ARRB1 and ARRB2. Interacts with CNIH4. Interacts with S100A4; this interaction stimulates T-lymphocyte chemotaxis. Post-translationally, sulfated on at least 2 of the N-terminal tyrosines. Sulfation is required for efficient binding of the chemokines, CCL3 and CCL4. Palmitoylation in the C-terminal is important for cell surface expression. In terms of processing, phosphorylation on serine residues in the C-terminal is stimulated by binding CC chemokines especially by APO-RANTES. Post-translationally, O-glycosylated, but not N-glycosylated. Ser-6 appears to be the major site even if Ser-7 may be also O-glycosylated. Also sialylated glycans present which contribute to chemokine binding. Thr-16 and Ser-17 may also be glycosylated and, if so, with small moieties such as a T-antigen.

The protein resides in the cell membrane. Its function is as follows. Receptor for a number of inflammatory CC-chemokines including CCL3/MIP-1-alpha, CCL4/MIP-1-beta and RANTES and subsequently transduces a signal by increasing the intracellular calcium ion level. May play a role in the control of granulocytic lineage proliferation or differentiation. Participates in T-lymphocyte migration to the infection site by acting as a chemotactic receptor. This is C-C chemokine receptor type 5 (CCR5) from Symphalangus syndactylus (Siamang).